The sequence spans 606 residues: Transmembrane 9 superfamily member 1 (606 aa).

Residues 1–27 (MTVLGHPRSWSCRWWPLLLLLLLTGRE) form the signal peptide. A glycan (N-linked (GlcNAc...) asparagine) is linked at Asn178. A run of 4 helical transmembrane segments spans residues 237 to 257 (LSII…AVIL), 310 to 330 (VLGV…MALL), 339 to 359 (GAIN…SGYV), and 373 to 393 (VWNI…TWSV). N-linked (GlcNAc...) asparagine glycosylation is present at Asn401. The next 4 membrane-spanning stretches (helical) occupy residues 412-432 (ILLL…IGGI), 469-489 (VGGF…FATV), 499-519 (GILF…SIAL), and 535-555 (SVLS…FYYA). N-linked (GlcNAc...) asparagine glycosylation is present at Asn559. A helical membrane pass occupies residues 570-590 (FGYSLLTGYVFFLMLGTISFF).

The protein belongs to the nonaspanin (TM9SF) (TC 9.A.2) family.

The protein resides in the lysosome membrane. The protein localises to the cytoplasmic vesicle. Its subcellular location is the autophagosome membrane. Its function is as follows. Plays an essential role in autophagy. The polypeptide is Transmembrane 9 superfamily member 1 (TM9SF1) (Bos taurus (Bovine)).